A 320-amino-acid chain; its full sequence is Endolytic peptidoglycan transglycosylase RlpA (320 aa).

The protein belongs to the RlpA family.

Functionally, lytic transglycosylase with a strong preference for naked glycan strands that lack stem peptides. The polypeptide is Endolytic peptidoglycan transglycosylase RlpA (Rickettsia prowazekii (strain Madrid E)).